The following is a 313-amino-acid chain: Glyoxylate/hydroxypyruvate reductase A (313 aa).

The active site involves Arg-228. Residue His-276 is the Proton donor of the active site.

Belongs to the D-isomer specific 2-hydroxyacid dehydrogenase family. GhrA subfamily.

It localises to the cytoplasm. It carries out the reaction glycolate + NADP(+) = glyoxylate + NADPH + H(+). It catalyses the reaction (R)-glycerate + NAD(+) = 3-hydroxypyruvate + NADH + H(+). The enzyme catalyses (R)-glycerate + NADP(+) = 3-hydroxypyruvate + NADPH + H(+). In terms of biological role, catalyzes the NADPH-dependent reduction of glyoxylate and hydroxypyruvate into glycolate and glycerate, respectively. This Yersinia enterocolitica serotype O:8 / biotype 1B (strain NCTC 13174 / 8081) protein is Glyoxylate/hydroxypyruvate reductase A.